Consider the following 444-residue polypeptide: 23S rRNA (uracil(1939)-C(5))-methyltransferase RlmD (444 aa).

One can recognise a TRAM domain in the interval 5–67 (RNRFDRTPFQ…RHFDEAKTVE (63 aa)). Residues Cys-80, Cys-86, Cys-89, and Cys-168 each contribute to the [4Fe-4S] cluster site. The S-adenosyl-L-methionine site is built by Gln-276, Phe-305, Asn-310, Glu-326, Asp-353, and Asp-374. The active-site Nucleophile is the Cys-400.

This sequence belongs to the class I-like SAM-binding methyltransferase superfamily. RNA M5U methyltransferase family. RlmD subfamily.

The catalysed reaction is uridine(1939) in 23S rRNA + S-adenosyl-L-methionine = 5-methyluridine(1939) in 23S rRNA + S-adenosyl-L-homocysteine + H(+). Catalyzes the formation of 5-methyl-uridine at position 1939 (m5U1939) in 23S rRNA. This is 23S rRNA (uracil(1939)-C(5))-methyltransferase RlmD from Xanthomonas oryzae pv. oryzae (strain MAFF 311018).